Consider the following 187-residue polypeptide: Peptidyl-tRNA hydrolase (187 aa).

Tyrosine 15 contacts tRNA. The Proton acceptor role is filled by histidine 20. Residues phenylalanine 64, asparagine 66, and asparagine 112 each coordinate tRNA.

This sequence belongs to the PTH family. As to quaternary structure, monomer.

The protein localises to the cytoplasm. It catalyses the reaction an N-acyl-L-alpha-aminoacyl-tRNA + H2O = an N-acyl-L-amino acid + a tRNA + H(+). In terms of biological role, hydrolyzes ribosome-free peptidyl-tRNAs (with 1 or more amino acids incorporated), which drop off the ribosome during protein synthesis, or as a result of ribosome stalling. Functionally, catalyzes the release of premature peptidyl moieties from peptidyl-tRNA molecules trapped in stalled 50S ribosomal subunits, and thus maintains levels of free tRNAs and 50S ribosomes. The polypeptide is Peptidyl-tRNA hydrolase (Parabacteroides distasonis (strain ATCC 8503 / DSM 20701 / CIP 104284 / JCM 5825 / NCTC 11152)).